The sequence spans 346 residues: SUMO-activating enzyme subunit 1 (346 aa).

M1 bears the N-acetylmethionine mark. V2 carries the N-acetylvaline; in SUMO-activating enzyme subunit 1, N-terminally processed modification. S12 carries the post-translational modification Phosphoserine. Residue K198 is modified to N6-acetyllysine.

Belongs to the ubiquitin-activating E1 family. In terms of assembly, heterodimer of SAE1 and UBA2/SAE2. The heterodimer corresponds to the two domains that are encoded on a single polypeptide chain in ubiquitin-activating enzyme E1. Interacts with UBE2I.

It is found in the nucleus. The protein operates within protein modification; protein sumoylation. The heterodimer acts as an E1 ligase for SUMO1, SUMO2, SUMO3, and probably SUMO4. It mediates ATP-dependent activation of SUMO proteins followed by formation of a thioester bond between a SUMO protein and a conserved active site cysteine residue on UBA2/SAE2. In Bos taurus (Bovine), this protein is SUMO-activating enzyme subunit 1 (SAE1).